Here is a 178-residue protein sequence, read N- to C-terminus: MSRIGYKEIDLPSGVEISQDGNVVTVKGPKGTLSREISPLIKMTIDGNVVKFDRDADTNKLKMLHGTTRANVNNMVEGVVDGYKKVLKLVGVGYRAQLKGNKLILTVGYSNPVEMDKPEDVEINVPDNTTIELSSINKEHLGNFAAEVRAVRSPEPYKGKGIRYENEHIIRKEGKTGK.

This sequence belongs to the universal ribosomal protein uL6 family. Part of the 50S ribosomal subunit.

Functionally, this protein binds to the 23S rRNA, and is important in its secondary structure. It is located near the subunit interface in the base of the L7/L12 stalk, and near the tRNA binding site of the peptidyltransferase center. This chain is Large ribosomal subunit protein uL6, found in Limosilactobacillus reuteri (strain DSM 20016) (Lactobacillus reuteri).